Reading from the N-terminus, the 37-residue chain is Large ribosomal subunit protein bL36c (37 aa).

This sequence belongs to the bacterial ribosomal protein bL36 family.

It localises to the plastid. It is found in the chloroplast. This chain is Large ribosomal subunit protein bL36c, found in Psilotum nudum (Whisk fern).